We begin with the raw amino-acid sequence, 460 residues long: Argininosuccinate lyase (460 aa).

The protein belongs to the lyase 1 family. Argininosuccinate lyase subfamily.

Its subcellular location is the cytoplasm. The enzyme catalyses 2-(N(omega)-L-arginino)succinate = fumarate + L-arginine. The protein operates within amino-acid biosynthesis; L-arginine biosynthesis; L-arginine from L-ornithine and carbamoyl phosphate: step 3/3. This is Argininosuccinate lyase from Alkaliphilus metalliredigens (strain QYMF).